The primary structure comprises 962 residues: Vacuolar membrane protease (962 aa).

The Cytoplasmic portion of the chain corresponds to 1-14; it reads MLAQFLRSLFRFRK. A helical transmembrane segment spans residues 15 to 35; that stretch reads TTVSVLLVATYVVVFLLNVWD. Residues 36–359 lie on the Vacuolar side of the membrane; the sequence is RIRYQYSLPE…FVTASTKDLF (324 aa). An N-linked (GlcNAc...) asparagine glycan is attached at Asn118. The Zn(2+) site is built by His153 and Asp165. Catalysis depends on Glu197, which acts as the Proton acceptor. Residues Glu198, Glu223, and His297 each contribute to the Zn(2+) site. The chain crosses the membrane as a helical span at residues 360-380; the sequence is TLNCVVLSVIPVIILVLEFVI. The Cytoplasmic segment spans residues 381–390; it reads QRRKTRERNP. The helical transmembrane segment at 391–411 threads the bilayer; that stretch reads LLVWLRLPFSMFISYLVTATF. At 412–431 the chain is on the vacuolar side; it reads RSSLFRVNPLIFSRDYVSPT. Residues 432 to 452 form a helical membrane-spanning segment; the sequence is IGFSFTFLILNYLVLSLLEYL. The Cytoplasmic portion of the chain corresponds to 453–460; sequence APSRDLKT. A helical membrane pass occupies residues 461–481; that stretch reads VSFVELFFGMWIALLWATIRL. At 482 to 489 the chain is on the vacuolar side; the sequence is CTSKYTAT. Residues 490–510 traverse the membrane as a helical segment; that stretch reads GVYPITVLYLLMSFGAIVGLV. Topologically, residues 511 to 601 are cytoplasmic; the sequence is CSAFKRKHSV…VVSALNYDWS (91 aa). The segment covering 531–554 has biased composition (polar residues); that stretch reads APNTYSSIEESPQQATNTEAPNEN. A disordered region spans residues 531-563; that stretch reads APNTYSSIEESPQQATNTEAPNENSPEEHDERA. Residues 602-622 form a helical membrane-spanning segment; sequence VQFLAVVPLASFFVIMCLSLI. Residues 623-639 lie on the Vacuolar side of the membrane; sequence LDGIYQTCQEGFQATWN. Asn639 carries N-linked (GlcNAc...) asparagine glycosylation. A helical transmembrane segment spans residues 640 to 660; that stretch reads VSKISMLGGMLLAIPVLPFCY. Position 661 (Lys661) is a topological domain, cytoplasmic. The helical transmembrane segment at 662–682 threads the bilayer; the sequence is LNYFVSMVLLFAAASAGIFSF. Over 683 to 962 the chain is Vacuolar; it reads ERAPFTESSP…LVIVNDYIEL (280 aa). N-linked (GlcNAc...) asparagine glycosylation is found at Asn812 and Asn839.

It belongs to the peptidase M28 family. Zn(2+) serves as cofactor.

Its subcellular location is the vacuole membrane. Functionally, may be involved in vacuolar sorting and osmoregulation. The polypeptide is Vacuolar membrane protease (Lachancea thermotolerans (strain ATCC 56472 / CBS 6340 / NRRL Y-8284) (Yeast)).